The primary structure comprises 194 residues: MNTKKNELPAPDATRISRTLSYLLRHAPQTIGLQLDPEGWADIDELIAGIARQGLHLDRATLETVCATNDKQRFALSDDGRRIRAVQGHSTPVVQRRYPAAQPPERLYHGTATRFLDSIRAQGLKPGARHHVHLSPDIRTALAVGTRYGVPVILEVDAQRMHRQGHTFFVAENGVWLTDTVPAEFLKEMDQPAR.

Belongs to the KptA/TPT1 family.

In terms of biological role, removes the 2'-phosphate from RNA via an intermediate in which the phosphate is ADP-ribosylated by NAD followed by a presumed transesterification to release the RNA and generate ADP-ribose 1''-2''-cyclic phosphate (APPR&gt;P). May function as an ADP-ribosylase. In Burkholderia lata (strain ATCC 17760 / DSM 23089 / LMG 22485 / NCIMB 9086 / R18194 / 383), this protein is Probable RNA 2'-phosphotransferase.